Here is a 191-residue protein sequence, read N- to C-terminus: CASP-like protein 1D1 (191 aa).

The Cytoplasmic portion of the chain corresponds to 1–22; it reads MTSTSKDTPESGYAVPPPNLFG. The chain crosses the membrane as a helical span at residues 23-43; sequence VDFGLRLLLLASAVSALVVLV. Residues 44–73 are Extracellular-facing; that stretch reads TSKQTESIPTSLPPPFPAFISRDAKFQHSP. The chain crosses the membrane as a helical span at residues 74-94; that stretch reads AFIYLLVALSVTCFYSIITMV. Over 95–118 the chain is Cytoplasmic; the sequence is ASFAAITSPSSSPRMLFHLVLSDA. Residues 119 to 139 traverse the membrane as a helical segment; sequence VMAGVMASAAGTAGSVAYLGL. The Extracellular portion of the chain corresponds to 140–160; it reads KGNSHVNWNKVCNVYDKFCRH. Residues 161–181 form a helical membrane-spanning segment; that stretch reads VGSSAAVSLVASVLLVSLVVL. At 182-191 the chain is on the cytoplasmic side; that stretch reads SSYSLYRRCR.

The protein belongs to the Casparian strip membrane proteins (CASP) family. As to quaternary structure, homodimer and heterodimers.

The protein resides in the cell membrane. The polypeptide is CASP-like protein 1D1 (Musa acuminata (Banana)).